The primary structure comprises 343 residues: UDP-3-O-acylglucosamine N-acyltransferase (343 aa).

The active-site Proton acceptor is the His-239.

Belongs to the transferase hexapeptide repeat family. LpxD subfamily. As to quaternary structure, homotrimer.

It catalyses the reaction a UDP-3-O-[(3R)-3-hydroxyacyl]-alpha-D-glucosamine + a (3R)-hydroxyacyl-[ACP] = a UDP-2-N,3-O-bis[(3R)-3-hydroxyacyl]-alpha-D-glucosamine + holo-[ACP] + H(+). The protein operates within bacterial outer membrane biogenesis; LPS lipid A biosynthesis. Catalyzes the N-acylation of UDP-3-O-acylglucosamine using 3-hydroxyacyl-ACP as the acyl donor. Is involved in the biosynthesis of lipid A, a phosphorylated glycolipid that anchors the lipopolysaccharide to the outer membrane of the cell. The sequence is that of UDP-3-O-acylglucosamine N-acyltransferase from Vibrio parahaemolyticus serotype O3:K6 (strain RIMD 2210633).